The primary structure comprises 25 residues: Dermaseptin-5.2TR (25 aa).

Valine 25 is subject to Valine amide.

In terms of tissue distribution, expressed by the skin glands.

It localises to the secreted. Functionally, has antimicrobial activity. In Phyllomedusa trinitatis (Trinidad leaf frog), this protein is Dermaseptin-5.2TR.